The sequence spans 281 residues: Urease accessory protein UreD (281 aa).

This sequence belongs to the UreD family. As to quaternary structure, ureD, UreF and UreG form a complex that acts as a GTP-hydrolysis-dependent molecular chaperone, activating the urease apoprotein by helping to assemble the nickel containing metallocenter of UreC. The UreE protein probably delivers the nickel.

It is found in the cytoplasm. In terms of biological role, required for maturation of urease via the functional incorporation of the urease nickel metallocenter. The polypeptide is Urease accessory protein UreD (Pseudomonas savastanoi pv. phaseolicola (strain 1448A / Race 6) (Pseudomonas syringae pv. phaseolicola (strain 1448A / Race 6))).